The primary structure comprises 411 residues: Putative competence-damage inducible protein (411 aa).

It belongs to the CinA family.

This Alkaliphilus metalliredigens (strain QYMF) protein is Putative competence-damage inducible protein.